A 160-amino-acid chain; its full sequence is Transcription elongation factor GreA (160 aa).

A coiled-coil region spans residues 1 to 71; sequence MAEKTYPMTK…GQISTLETQI (71 aa).

This sequence belongs to the GreA/GreB family.

Functionally, necessary for efficient RNA polymerase transcription elongation past template-encoded arresting sites. The arresting sites in DNA have the property of trapping a certain fraction of elongating RNA polymerases that pass through, resulting in locked ternary complexes. Cleavage of the nascent transcript by cleavage factors such as GreA or GreB allows the resumption of elongation from the new 3'terminus. GreA releases sequences of 2 to 3 nucleotides. This Streptococcus uberis (strain ATCC BAA-854 / 0140J) protein is Transcription elongation factor GreA.